The primary structure comprises 296 residues: MTDPLSIAPRDQAEILARALPYIRRFHGKTMVIKYGGNAMTDPALQADFAEDVVLLKLVGMNPVVVHGGGPQIETALNRLGKKGVFIQGMRVTDAETMEVVEWVLAGQVQQDIVGLINQAGGKAVGLTGRDGAMIRAQKLKMVDSKDSSIEHDIGQVGDIVSIDPSVVKALQDDAFIPVISPIGFGENNESYNINADVVASKLATVLQAQKLVLLTNTPGVLDKKGNLLTDLTAREIDALFADGTISGGMLPKIAGALDAAKAGVHAVHIIDGRVPHAMLLEILTDQAFGTMIRSH.

Substrate is bound by residues 69–70 (GG), Arg-91, and Asn-193.

This sequence belongs to the acetylglutamate kinase family. ArgB subfamily.

Its subcellular location is the cytoplasm. The catalysed reaction is N-acetyl-L-glutamate + ATP = N-acetyl-L-glutamyl 5-phosphate + ADP. Its pathway is amino-acid biosynthesis; L-arginine biosynthesis; N(2)-acetyl-L-ornithine from L-glutamate: step 2/4. Its function is as follows. Catalyzes the ATP-dependent phosphorylation of N-acetyl-L-glutamate. This Verminephrobacter eiseniae (strain EF01-2) protein is Acetylglutamate kinase.